The primary structure comprises 437 residues: CCA-adding enzyme (437 aa).

The ATP site is built by S47 and R50. The CTP site is built by S47 and R50. Residues E59, D61, and D110 each coordinate Mg(2+). Residues H133, K152, and Y161 each coordinate ATP. Residues H133, K152, and Y161 each contribute to the CTP site.

The protein belongs to the tRNA nucleotidyltransferase/poly(A) polymerase family. Archaeal CCA-adding enzyme subfamily. Homodimer. Requires Mg(2+) as cofactor.

The catalysed reaction is a tRNA precursor + 2 CTP + ATP = a tRNA with a 3' CCA end + 3 diphosphate. It catalyses the reaction a tRNA with a 3' CCA end + 2 CTP + ATP = a tRNA with a 3' CCACCA end + 3 diphosphate. Its function is as follows. Catalyzes the addition and repair of the essential 3'-terminal CCA sequence in tRNAs without using a nucleic acid template. Adds these three nucleotides in the order of C, C, and A to the tRNA nucleotide-73, using CTP and ATP as substrates and producing inorganic pyrophosphate. tRNA 3'-terminal CCA addition is required both for tRNA processing and repair. Also involved in tRNA surveillance by mediating tandem CCA addition to generate a CCACCA at the 3' terminus of unstable tRNAs. While stable tRNAs receive only 3'-terminal CCA, unstable tRNAs are marked with CCACCA and rapidly degraded. The structural flexibility of RNA controls the choice between CCA versus CCACCA addition: following the first CCA addition cycle, nucleotide-binding to the active site triggers a clockwise screw motion, producing torque on the RNA. This ejects stable RNAs, whereas unstable RNAs are refolded while bound to the enzyme and subjected to a second CCA catalytic cycle. This chain is CCA-adding enzyme, found in Archaeoglobus fulgidus (strain ATCC 49558 / DSM 4304 / JCM 9628 / NBRC 100126 / VC-16).